The following is a 150-amino-acid chain: Arginine repressor (150 aa).

Belongs to the ArgR family.

It is found in the cytoplasm. The protein operates within amino-acid biosynthesis; L-arginine biosynthesis [regulation]. Regulates arginine biosynthesis genes. The sequence is that of Arginine repressor from Psychromonas ingrahamii (strain DSM 17664 / CCUG 51855 / 37).